The primary structure comprises 25 residues: TCLAHKQQAVNRLLYRIYSPIXXXF.

It belongs to the tyrosinase family. Hemocyanin subfamily. As to expression, hemolymph.

It is found in the secreted. The protein localises to the extracellular space. In terms of biological role, hemocyanins are copper-containing oxygen carriers occurring freely dissolved in the hemolymph of many mollusks and arthropods. This Carcinus maenas (Common shore crab) protein is Hemocyanin subunit 2.